A 418-amino-acid polypeptide reads, in one-letter code: UDP-N-acetylglucosamine 1-carboxyvinyltransferase 1 (418 aa).

22–23 is a phosphoenolpyruvate binding site; it reads KN. Arginine 94 contacts UDP-N-acetyl-alpha-D-glucosamine. The active-site Proton donor is the cysteine 118. Residue cysteine 118 is modified to 2-(S-cysteinyl)pyruvic acid O-phosphothioketal. Residues 123 to 127, aspartate 306, and isoleucine 328 contribute to the UDP-N-acetyl-alpha-D-glucosamine site; that span reads RPIDL.

This sequence belongs to the EPSP synthase family. MurA subfamily.

The protein resides in the cytoplasm. It catalyses the reaction phosphoenolpyruvate + UDP-N-acetyl-alpha-D-glucosamine = UDP-N-acetyl-3-O-(1-carboxyvinyl)-alpha-D-glucosamine + phosphate. It functions in the pathway cell wall biogenesis; peptidoglycan biosynthesis. Cell wall formation. Adds enolpyruvyl to UDP-N-acetylglucosamine. The polypeptide is UDP-N-acetylglucosamine 1-carboxyvinyltransferase 1 (Clostridium acetobutylicum (strain ATCC 824 / DSM 792 / JCM 1419 / IAM 19013 / LMG 5710 / NBRC 13948 / NRRL B-527 / VKM B-1787 / 2291 / W)).